The chain runs to 142 residues: Hemoglobin subunit alpha-2 (142 aa).

The region spanning 2 to 142 is the Globin domain; that stretch reads VLSPADKTNV…VSTVLTSKYR (141 aa). Histidine 59 provides a ligand contact to O2. Histidine 88 contributes to the heme b binding site.

The protein belongs to the globin family. As to quaternary structure, heterotetramer of two alpha chains and two beta chains. As to expression, red blood cells.

Functionally, involved in oxygen transport from the lung to the various peripheral tissues. This is Hemoglobin subunit alpha-2 from Arctocephalus galapagoensis (Galapagoes fur seal).